The following is a 190-amino-acid chain: Holliday junction branch migration complex subunit RuvA (190 aa).

The domain I stretch occupies residues 1–65 (MIGNLSGIVD…ENVAQLYGFI (65 aa)). The tract at residues 66–143 (SKEEQQCLRL…KLEINNNNFH (78 aa)) is domain II. A flexible linker region spans residues 144–147 (PINE). Residues 147–190 (EDALSALINLGYEKMKAYDTIKKYRPNLDTKDIIRMALKELSIL) are domain III.

This sequence belongs to the RuvA family. Homotetramer. Forms an RuvA(8)-RuvB(12)-Holliday junction (HJ) complex. HJ DNA is sandwiched between 2 RuvA tetramers; dsDNA enters through RuvA and exits via RuvB. An RuvB hexamer assembles on each DNA strand where it exits the tetramer. Each RuvB hexamer is contacted by two RuvA subunits (via domain III) on 2 adjacent RuvB subunits; this complex drives branch migration. In the full resolvosome a probable DNA-RuvA(4)-RuvB(12)-RuvC(2) complex forms which resolves the HJ.

The protein localises to the cytoplasm. In terms of biological role, the RuvA-RuvB-RuvC complex processes Holliday junction (HJ) DNA during genetic recombination and DNA repair, while the RuvA-RuvB complex plays an important role in the rescue of blocked DNA replication forks via replication fork reversal (RFR). RuvA specifically binds to HJ cruciform DNA, conferring on it an open structure. The RuvB hexamer acts as an ATP-dependent pump, pulling dsDNA into and through the RuvAB complex. HJ branch migration allows RuvC to scan DNA until it finds its consensus sequence, where it cleaves and resolves the cruciform DNA. The polypeptide is Holliday junction branch migration complex subunit RuvA (Wolbachia pipientis wMel).